A 507-amino-acid polypeptide reads, in one-letter code: MNKDINIAAIIKNEIENFEGKIQNHDIGKVIIVGDGVALVSGIEKVKFGELVEFENNVLGIALNLEQDLIGVVIMASENSVFQGSIVRRTKSVISITVGDQLLGRVVNALGIPIDGKAELDNSLKSAIFTNAPSIMDRKSVDRGLKTGILAIDSLVPIGKGQRELIIGDRQTGKTTIAIDAILNQKGKNVYCVYVAIGQKNSSVAQIVSLLEKKGAFEYTTVILAGASELSPLQYLAPYSGAAIAEYWMNKKKDVLIIYDDLSKHAIAYRTLSLLLRRPPGREAFPGDIFYQHSYLLERSAQLSNDKGGGSITALPIIETQAGDISAYIPTNVISITDGQIFLRDSLFNSGQKPAIDIGLSVSRVGSAAQTNLMKWASSSLKLNLAQYNELKAFAQFGSDLGPSSQLILDRGNKIYEILKQENQYPLTERQQIMLLILIRENLIDSLEQKSIPLFKSAFLKYCDSEPKFRDKIEKMDYNRVLEPNNLAGILKDITDFIEKFNLGNVF.

Residue 168–175 coordinates ATP; sequence GDRQTGKT.

Belongs to the ATPase alpha/beta chains family. In terms of assembly, F-type ATPases have 2 components, CF(1) - the catalytic core - and CF(0) - the membrane proton channel. CF(1) has five subunits: alpha(3), beta(3), gamma(1), delta(1), epsilon(1). CF(0) has three main subunits: a(1), b(2) and c(9-12). The alpha and beta chains form an alternating ring which encloses part of the gamma chain. CF(1) is attached to CF(0) by a central stalk formed by the gamma and epsilon chains, while a peripheral stalk is formed by the delta and b chains.

It is found in the cell membrane. The catalysed reaction is ATP + H2O + 4 H(+)(in) = ADP + phosphate + 5 H(+)(out). Its function is as follows. Produces ATP from ADP in the presence of a proton gradient across the membrane. The alpha chain is a regulatory subunit. The chain is ATP synthase subunit alpha from Mesomycoplasma hyopneumoniae (strain 232) (Mycoplasma hyopneumoniae).